The primary structure comprises 302 residues: MDQKRLTHLRQLEAESIHIIREVAAEFSNPVMMYSIGKDSSVMLHLARKAFYPGTLPFPLLHVDTGWKFREMYEFRDRTAKAYGCELLVHKNPEGVAMGINPFVHGSAKHTDIMKTEGLKQALNKYGFDAAFGGARRDEEKSRAKERIYSFRDRFHRWDPKNQRPELWHNYNGQINKGESIRVFPLSNWTELDIWQYIYLENIEIVPLYLAAERPVLERDGMLMMIDDDRIDLQPGEVIEKRMVRFRTLGCWPLTGAVESEAQTLPEIIEEMLVSTTSERQGRVIDRDQAGSMELKKRQGYF.

It belongs to the PAPS reductase family. CysD subfamily. In terms of assembly, heterodimer composed of CysD, the smaller subunit, and CysN.

The enzyme catalyses sulfate + ATP + H(+) = adenosine 5'-phosphosulfate + diphosphate. The protein operates within sulfur metabolism; hydrogen sulfide biosynthesis; sulfite from sulfate: step 1/3. In terms of biological role, with CysN forms the ATP sulfurylase (ATPS) that catalyzes the adenylation of sulfate producing adenosine 5'-phosphosulfate (APS) and diphosphate, the first enzymatic step in sulfur assimilation pathway. APS synthesis involves the formation of a high-energy phosphoric-sulfuric acid anhydride bond driven by GTP hydrolysis by CysN coupled to ATP hydrolysis by CysD. This is Sulfate adenylyltransferase subunit 2 from Klebsiella pneumoniae (strain 342).